The sequence spans 370 residues: 4-hydroxy-3-methylbut-2-en-1-yl diphosphate synthase (flavodoxin) (370 aa).

4 residues coordinate [4Fe-4S] cluster: cysteine 268, cysteine 271, cysteine 303, and glutamate 310.

Belongs to the IspG family. [4Fe-4S] cluster serves as cofactor.

The enzyme catalyses (2E)-4-hydroxy-3-methylbut-2-enyl diphosphate + oxidized [flavodoxin] + H2O + 2 H(+) = 2-C-methyl-D-erythritol 2,4-cyclic diphosphate + reduced [flavodoxin]. It participates in isoprenoid biosynthesis; isopentenyl diphosphate biosynthesis via DXP pathway; isopentenyl diphosphate from 1-deoxy-D-xylulose 5-phosphate: step 5/6. In terms of biological role, converts 2C-methyl-D-erythritol 2,4-cyclodiphosphate (ME-2,4cPP) into 1-hydroxy-2-methyl-2-(E)-butenyl 4-diphosphate. In Bacillus cereus (strain AH187), this protein is 4-hydroxy-3-methylbut-2-en-1-yl diphosphate synthase (flavodoxin).